The sequence spans 143 residues: Nucleoside diphosphate kinase (143 aa).

The ATP site is built by lysine 11, phenylalanine 59, arginine 87, threonine 93, arginine 104, and asparagine 114. The active-site Pros-phosphohistidine intermediate is the histidine 117.

Belongs to the NDK family. Homotetramer. Requires Mg(2+) as cofactor.

The protein localises to the cytoplasm. It carries out the reaction dZDP + ATP = dZTP + ADP. It catalyses the reaction a 2'-deoxyribonucleoside 5'-diphosphate + ATP = a 2'-deoxyribonucleoside 5'-triphosphate + ADP. The catalysed reaction is a ribonucleoside 5'-diphosphate + ATP = a ribonucleoside 5'-triphosphate + ADP. It participates in purine metabolism. Major role in the synthesis of nucleoside triphosphates other than ATP. The ATP gamma phosphate is transferred to the NDP beta phosphate via a ping-pong mechanism, using a phosphorylated active-site intermediate. Its function is as follows. (Microbial infection) Catalyzes the phosphorylation of dZDP to dZTP, when the bacterium is infected by a phage that produces the substrate for the synthesis of dZTP (2- amino-2'-deoxyadenosine 5'-triphosphate), which is then used by the phage as a DNA polymerase substrate. The chain is Nucleoside diphosphate kinase from Salmonella paratyphi C (strain RKS4594).